Consider the following 264-residue polypeptide: Transcription initiation factor TFIID subunit 9 (264 aa).

K5 carries the post-translational modification N6-acetyllysine. Phosphoserine is present on residues S149, S152, S155, and S158. The segment at V150–T174 is disordered. A compositionally biased stretch (polar residues) spans G151 to T174. T159, T161, T164, and T178 each carry phosphothreonine. Phosphoserine is present on residues S181 and S196. The tract at residues Q233–L264 is disordered. Acidic residues predominate over residues E249–L264.

Belongs to the TAF9 family. As to quaternary structure, component of the TFIID basal transcription factor complex, composed of TATA-box-binding protein TBP, and a number of TBP-associated factors (TAFs), including TAF1, TAF2, TAF3, TAF4, TAF5, TAF6, TAF7, TAF8, TAF9, TAF10, TAF11, TAF12 and TAF13. Component of the TATA-binding protein-free TAF complex (TFTC), the PCAF histone acetylase complex and the STAGA transcription coactivator-HAT complex. The PCAF complex consists at least of TADA2L/ADA2, SUPT3H/SPT3, TADA3L/ADA3, TAF5L/PAF65-beta, TAF6L/PAF65-alpha, TAF10/TAFII30, TAF12/TAFII20, TAF9/TAFII31 and TRRAP. The STAGA transcription coactivator-HAT complex consists at least of SUPT3H, GCN5L2, SUPT7L, TAF5L, TAF6L, TADA3L, TAD1L, TAF10, TAF12, TRRAP and TAF9. Binds N-terminal domain of p53/TP53 which is essential for transcription. Component of some MLL1/MLL complex, at least composed of the core components KMT2A/MLL1, ASH2L, HCFC1/HCF1, WDR5 and RBBP5, as well as the facultative components BACC1, CHD8, E2F6, HSP70, INO80C, KANSL1, LAS1L, MAX, MCRS1, MGA, MYST1/MOF, PELP1, PHF20, PRP31, RING2, RUVB1/TIP49A, RUVB2/TIP49B, SENP3, TAF1, TAF4, TAF6, TAF7, TAF9 and TEX10. Binds TFIIB and the Herpes simplex virus activator VP16. Forms a heterodimer with TAF6 in a complex with the TAF4B-TAF12 heterodimer. Also interacts with TAF5. Binds directly DNA. Increased DNA binding when complexed with TAF6.

Its subcellular location is the nucleus. Functionally, the TFIID basal transcription factor complex plays a major role in the initiation of RNA polymerase II (Pol II)-dependent transcription. TFIID recognizes and binds promoters with or without a TATA box via its subunit TBP, a TATA-box-binding protein, and promotes assembly of the pre-initiation complex (PIC). The TFIID complex consists of TBP and TBP-associated factors (TAFs), including TAF1, TAF2, TAF3, TAF4, TAF5, TAF6, TAF7, TAF8, TAF9, TAF10, TAF11, TAF12 and TAF13. TAF9 is also a component of the TBP-free TAFII complex (TFTC), the PCAF histone acetylase complex and the STAGA transcription coactivator-HAT complex. TAF9 and its paralog TAF9B are involved in transcriptional activation as well as repression of distinct but overlapping sets of genes. Essential for cell viability. May have a role in gene regulation associated with apoptosis. In Rattus norvegicus (Rat), this protein is Transcription initiation factor TFIID subunit 9.